The chain runs to 214 residues: Thymidylate kinase (214 aa).

Gly14–Thr21 provides a ligand contact to ATP.

The protein belongs to the thymidylate kinase family.

The catalysed reaction is dTMP + ATP = dTDP + ADP. In terms of biological role, phosphorylation of dTMP to form dTDP in both de novo and salvage pathways of dTTP synthesis. This chain is Thymidylate kinase, found in Mannheimia succiniciproducens (strain KCTC 0769BP / MBEL55E).